Here is a 450-residue protein sequence, read N- to C-terminus: Phosphoglucosamine mutase (450 aa).

The Phosphoserine intermediate role is filled by S101. The Mg(2+) site is built by S101, D242, D244, and D246. Phosphoserine is present on S101.

This sequence belongs to the phosphohexose mutase family. Mg(2+) is required as a cofactor. Post-translationally, activated by phosphorylation.

It carries out the reaction alpha-D-glucosamine 1-phosphate = D-glucosamine 6-phosphate. Its function is as follows. Catalyzes the conversion of glucosamine-6-phosphate to glucosamine-1-phosphate. This Rhodopseudomonas palustris (strain BisB5) protein is Phosphoglucosamine mutase.